The following is a 944-amino-acid chain: Protein translocase subunit SecA (944 aa).

ATP-binding positions include Gln96, 114-118 (GEGKT), and Asp554.

It belongs to the SecA family. As to quaternary structure, monomer and homodimer. Part of the essential Sec protein translocation apparatus which comprises SecA, SecYEG and auxiliary proteins SecDF. Other proteins may also be involved.

It localises to the cell inner membrane. Its subcellular location is the cytoplasm. The enzyme catalyses ATP + H2O + cellular proteinSide 1 = ADP + phosphate + cellular proteinSide 2.. In terms of biological role, part of the Sec protein translocase complex. Interacts with the SecYEG preprotein conducting channel. Has a central role in coupling the hydrolysis of ATP to the transfer of proteins into and across the cell membrane, serving as an ATP-driven molecular motor driving the stepwise translocation of polypeptide chains across the membrane. This is Protein translocase subunit SecA from Hydrogenobaculum sp. (strain Y04AAS1).